A 496-amino-acid chain; its full sequence is ATP synthase subunit beta, chloroplastic (496 aa).

An ATP-binding site is contributed by 170-177 (GGAGVGKT).

The protein belongs to the ATPase alpha/beta chains family. F-type ATPases have 2 components, CF(1) - the catalytic core - and CF(0) - the membrane proton channel. CF(1) has five subunits: alpha(3), beta(3), gamma(1), delta(1), epsilon(1). CF(0) has four main subunits: a(1), b(1), b'(1) and c(9-12).

It is found in the plastid. The protein localises to the chloroplast thylakoid membrane. The enzyme catalyses ATP + H2O + 4 H(+)(in) = ADP + phosphate + 5 H(+)(out). Functionally, produces ATP from ADP in the presence of a proton gradient across the membrane. The catalytic sites are hosted primarily by the beta subunits. The chain is ATP synthase subunit beta, chloroplastic from Dioscorea elephantipes (Elephant's foot yam).